A 307-amino-acid chain; its full sequence is Taste receptor type 2 member 106 (307 aa).

At 1–7 (MLTIPEG) the chain is on the extracellular side. Residues 8-28 (ILLCFITSGSVLGVLGNGFIL) traverse the membrane as a helical segment. Over 29–41 (HVNCTDCVRQKFS) the chain is Cytoplasmic. The chain crosses the membrane as a helical span at residues 42 to 62 (TTGFIFTGLAISRICVICIII). The Extracellular segment spans residues 63–81 (SDGYLKLFSPHMVASDAHI). The chain crosses the membrane as a helical span at residues 82-104 (IGISYLWIITNHTSTCFATILNL). Residues 105 to 124 (FYFLKIANFSHYIFFCLKRK) are Cytoplasmic-facing. The helical transmembrane segment at 125 to 145 (LNTIFIFLLGCLFISWSVAFP) threads the bilayer. At 146–179 (QTVKIFNDKMKHRNTSWKFHLHKSKFIINHILLN) the chain is on the extracellular side. The N-linked (GlcNAc...) asparagine glycan is linked to N159. The chain crosses the membrane as a helical span at residues 180-200 (LGVIFFCMVAIITSFLLIISL). The Cytoplasmic portion of the chain corresponds to 201-227 (WKHNRKMQLYVSRFKSLNTEVHLKVMK). Residues 228–248 (VLISFIILLILHVIGILIETL) form a helical membrane-spanning segment. Residues 249-257 (SFLRYENKL) are Extracellular-facing. Residues 258–278 (LLILGLNFSSMYPCCHSFILI) traverse the membrane as a helical segment. Residues 279 to 307 (LANNQLKQASLKALKQFKCHKKDKDVRET) are Cytoplasmic-facing.

This sequence belongs to the G-protein coupled receptor T2R family.

It is found in the membrane. Putative taste receptor which may play a role in the perception of bitterness. The sequence is that of Taste receptor type 2 member 106 from Rattus norvegicus (Rat).